The sequence spans 168 residues: Protein FAM163A (168 aa).

The chain crosses the membrane as a helical span at residues 6-26; the sequence is VVITGGILATVILLCIIAVLC.

Belongs to the FAM163 family.

It localises to the membrane. This Mus musculus (Mouse) protein is Protein FAM163A (Fam163a).